The chain runs to 373 residues: Glutamine synthetase (373 aa).

An N-acetylalanine modification is found at Ala2. The required for glutamine-induced ubiquitination by CRL4(CRBN) and proteasomal degradation stretch occupies residues 2-25 (ATSASSHLNKGIKQVYMSLPQGEK). 2 positions are modified to N6-acetyllysine: Lys11 and Lys14. Residues 24 to 106 (EKVQAMYIWI…VFCEVFKYNR (83 aa)) enclose the GS beta-grasp domain. Tyr104 carries the phosphotyrosine modification. The GS catalytic domain occupies 113 to 373 (LRHTCKRIMD…TGDEPFQYKN (261 aa)). Residue Glu134 participates in ATP binding. Positions 134, 136, 196, and 203 each coordinate Mn(2+). ATP is bound at residue 203-208 (EFQIGP). An L-glutamate-binding site is contributed by 246–247 (NW). Mn(2+) is bound at residue His253. Residues 255–257 (NFS), Arg319, and Arg324 contribute to the ATP site. Arg319 is a binding site for L-glutamate. 336–338 (YFE) serves as a coordination point for ADP. Glu338 contacts Mn(2+). Arg340 contacts L-glutamate. Ser343 carries the post-translational modification Phosphoserine.

This sequence belongs to the glutamine synthetase family. As to quaternary structure, decamer; composed of two pentamers. Interacts with PALMD. Interacts with RHOJ. Interacts with BEST2; this interaction tethers a fraction of GLUL to the membrane, causing a decrease of cytosolic glutamine synthase (GS) activity and inhibits the chloride channel activity of BEST2 by affecting the gating at the aperture in the absence of intracellular glutamate. The cofactor is Mg(2+). It depends on Mn(2+) as a cofactor. Palmitoylated; undergoes autopalmitoylation. Post-translationally, acetylated by EP300/p300; acetylation is stimulated by increased glutamine levels and promotes ubiquitin-mediated proteasomal degradation. In terms of processing, ubiquitinated by ZNRF1. Ubiquitinated by the DCX (DDB1-CUL4-X-box) E3 ubiquitin-protein ligase complex called CRL4(CRBN), leading to proteasomal degradation.

The protein resides in the cytoplasm. It localises to the cytosol. The protein localises to the microsome. It is found in the mitochondrion. Its subcellular location is the cell membrane. The catalysed reaction is L-glutamate + NH4(+) + ATP = L-glutamine + ADP + phosphate + H(+). The enzyme catalyses L-cysteinyl-[protein] + hexadecanoyl-CoA = S-hexadecanoyl-L-cysteinyl-[protein] + CoA. Glutamine synthetase activity is inhibited by methionine sulfoximine (MSO). In terms of biological role, glutamine synthetase that catalyzes the ATP-dependent conversion of glutamate and ammonia to glutamine. Its role depends on tissue localization: in the brain, it regulates the levels of toxic ammonia and converts neurotoxic glutamate to harmless glutamine, whereas in the liver, it is one of the enzymes responsible for the removal of ammonia. Plays a key role in ammonium detoxification during erythropoiesis: the glutamine synthetase activity is required to remove ammonium generated by porphobilinogen deaminase (HMBS) during heme biosynthesis to prevent ammonium accumulation and oxidative stress. Essential for proliferation of fetal skin fibroblasts. Independently of its glutamine synthetase activity, required for endothelial cell migration during vascular development. Involved in angiogenesis by regulating membrane localization and activation of the GTPase RHOJ, possibly by promoting RHOJ palmitoylation. May act as a palmitoyltransferase for RHOJ: able to autopalmitoylate and then transfer the palmitoyl group to RHOJ. Plays a role in ribosomal 40S subunit biogenesis. Through the interaction with BEST2, inhibits BEST2 channel activity by affecting the gating at the aperture in the absence of intracellular L-glutamate, but sensitizes BEST2 to intracellular L-glutamate, which promotes the opening of BEST2 and thus relieves its inhibitory effect on BEST2. This Sus scrofa (Pig) protein is Glutamine synthetase.